A 440-amino-acid chain; its full sequence is UDP-N-acetylmuramoylalanine--D-glutamate ligase (440 aa).

128 to 134 contributes to the ATP binding site; the sequence is GTNGKTT.

Belongs to the MurCDEF family.

It localises to the cytoplasm. It carries out the reaction UDP-N-acetyl-alpha-D-muramoyl-L-alanine + D-glutamate + ATP = UDP-N-acetyl-alpha-D-muramoyl-L-alanyl-D-glutamate + ADP + phosphate + H(+). The protein operates within cell wall biogenesis; peptidoglycan biosynthesis. Its function is as follows. Cell wall formation. Catalyzes the addition of glutamate to the nucleotide precursor UDP-N-acetylmuramoyl-L-alanine (UMA). The polypeptide is UDP-N-acetylmuramoylalanine--D-glutamate ligase (Lawsonia intracellularis (strain PHE/MN1-00)).